The primary structure comprises 172 residues: ATP synthase subunit b (172 aa).

A helical membrane pass occupies residues 27–47 (LAIVIFGLYKFLPPFVGGILE).

Belongs to the ATPase B chain family. As to quaternary structure, F-type ATPases have 2 components, F(1) - the catalytic core - and F(0) - the membrane proton channel. F(1) has five subunits: alpha(3), beta(3), gamma(1), delta(1), epsilon(1). F(0) has four main subunits: a(1), b(1), b'(1) and c(10-14). The alpha and beta chains form an alternating ring which encloses part of the gamma chain. F(1) is attached to F(0) by a central stalk formed by the gamma and epsilon chains, while a peripheral stalk is formed by the delta, b and b' chains.

It is found in the cellular thylakoid membrane. In terms of biological role, f(1)F(0) ATP synthase produces ATP from ADP in the presence of a proton or sodium gradient. F-type ATPases consist of two structural domains, F(1) containing the extramembraneous catalytic core and F(0) containing the membrane proton channel, linked together by a central stalk and a peripheral stalk. During catalysis, ATP synthesis in the catalytic domain of F(1) is coupled via a rotary mechanism of the central stalk subunits to proton translocation. Functionally, component of the F(0) channel, it forms part of the peripheral stalk, linking F(1) to F(0). The sequence is that of ATP synthase subunit b from Prochlorococcus marinus (strain MIT 9303).